Reading from the N-terminus, the 469-residue chain is ATP-dependent protease ATPase subunit HslU (469 aa).

Residues isoleucine 24, 66-71 (GVGKTE), aspartate 282, glutamate 347, and arginine 419 contribute to the ATP site.

The protein belongs to the ClpX chaperone family. HslU subfamily. A double ring-shaped homohexamer of HslV is capped on each side by a ring-shaped HslU homohexamer. The assembly of the HslU/HslV complex is dependent on binding of ATP.

It is found in the cytoplasm. Its function is as follows. ATPase subunit of a proteasome-like degradation complex; this subunit has chaperone activity. The binding of ATP and its subsequent hydrolysis by HslU are essential for unfolding of protein substrates subsequently hydrolyzed by HslV. HslU recognizes the N-terminal part of its protein substrates and unfolds these before they are guided to HslV for hydrolysis. The polypeptide is ATP-dependent protease ATPase subunit HslU (Listeria monocytogenes serotype 4b (strain CLIP80459)).